The sequence spans 1480 residues: Nonribosomal peptide synthetase inpA (1480 aa).

Low complexity predominate over residues 1-17 (MSHSMSSSSSSSSSSSS). The tract at residues 1-24 (MSHSMSSSSSSSSSSSSSRDEGQS) is disordered. Residues 44–458 (VQDVYPCTPL…QLISPQDLDQ (415 aa)) form a condensation region. The adenylation stretch occupies residues 479-871 (QRHIDTRPDA…GRKDSQVKIR (393 aa)). The region spanning 1003–1082 (DSTNKVALRL…GLAAMITSPH (80 aa)) is the Carrier domain. At Ser-1041 the chain carries O-(pantetheine 4'-phosphoryl)serine. The segment at 1117-1436 (KVFLTGATGL…VLAMLQDPQM (320 aa)) is thioesterase (TE) domain.

The protein belongs to the NRP synthetase family.

It participates in secondary metabolite biosynthesis. Functionally, nonribosomal peptide synthetase; part of the inp gene cluster that mediates the biosynthesis of fellutamide B, a mycotoxin that acts as a proteasome inhibitor. In the first step of fellutabmide B biosynthesis, inpC activates 3-hydroxydodecanoic acid to generate 3-hydroxydodecanoyl-AMP that is then loaded onto the T0 domain of inpB. The 3-hydroxydodecanoyl-S-phosphopantetheinyl-T0 is sequentially extended with L-Asn and L-Gln by the two CAT modules of inpB. The linear lipodipeptide from inpB is then transferred onto inpA for the addition of the third amino acid, L-Leu. Reductive releasing of the lipotripeptide by the TE domain of inpA produces (2S)-fellutamide B. InpF might be involved in the release and transfer of the lipodipeptide from inpB to inpA. The inp cluster-encoded proteasome subunit inpE confers resistance to internally produced fellutamides. The MFS efflux transporter inpD may contribute to fellutamide resistance as well. The chain is Nonribosomal peptide synthetase inpA from Emericella nidulans (strain FGSC A4 / ATCC 38163 / CBS 112.46 / NRRL 194 / M139) (Aspergillus nidulans).